We begin with the raw amino-acid sequence, 349 residues long: N-acetyl-gamma-glutamyl-phosphate reductase (349 aa).

The active site involves cysteine 149.

Belongs to the NAGSA dehydrogenase family. Type 1 subfamily.

Its subcellular location is the cytoplasm. It carries out the reaction N-acetyl-L-glutamate 5-semialdehyde + phosphate + NADP(+) = N-acetyl-L-glutamyl 5-phosphate + NADPH + H(+). The protein operates within amino-acid biosynthesis; L-arginine biosynthesis; N(2)-acetyl-L-ornithine from L-glutamate: step 3/4. In terms of biological role, catalyzes the NADPH-dependent reduction of N-acetyl-5-glutamyl phosphate to yield N-acetyl-L-glutamate 5-semialdehyde. The polypeptide is N-acetyl-gamma-glutamyl-phosphate reductase (Acinetobacter baumannii (strain ACICU)).